A 383-amino-acid chain; its full sequence is 8-amino-7-oxononanoate synthase (383 aa).

R22 is a substrate binding site. Residue 109–110 participates in pyridoxal 5'-phosphate binding; the sequence is GF. A substrate-binding site is contributed by H134. Pyridoxal 5'-phosphate-binding residues include S178, H206, and T232. The residue at position 235 (K235) is an N6-(pyridoxal phosphate)lysine. T348 provides a ligand contact to substrate.

The protein belongs to the class-II pyridoxal-phosphate-dependent aminotransferase family. BioF subfamily. In terms of assembly, homodimer. Pyridoxal 5'-phosphate serves as cofactor.

It catalyses the reaction 6-carboxyhexanoyl-[ACP] + L-alanine + H(+) = (8S)-8-amino-7-oxononanoate + holo-[ACP] + CO2. Its pathway is cofactor biosynthesis; biotin biosynthesis. Its function is as follows. Catalyzes the decarboxylative condensation of pimeloyl-[acyl-carrier protein] and L-alanine to produce 8-amino-7-oxononanoate (AON), [acyl-carrier protein], and carbon dioxide. This chain is 8-amino-7-oxononanoate synthase, found in Vibrio campbellii (strain ATCC BAA-1116).